The primary structure comprises 876 residues: Alanine--tRNA ligase (876 aa).

Residue Lys74 is modified to N6-acetyllysine. Residues His564, His568, Cys666, and His670 each coordinate Zn(2+).

It belongs to the class-II aminoacyl-tRNA synthetase family. In terms of assembly, homotetramer. Zn(2+) serves as cofactor.

It localises to the cytoplasm. The catalysed reaction is tRNA(Ala) + L-alanine + ATP = L-alanyl-tRNA(Ala) + AMP + diphosphate. Functionally, catalyzes the attachment of alanine to tRNA(Ala) in a two-step reaction: alanine is first activated by ATP to form Ala-AMP and then transferred to the acceptor end of tRNA(Ala). Also edits incorrectly charged Ser-tRNA(Ala) and Gly-tRNA(Ala) via its editing domain. This Escherichia coli O157:H7 protein is Alanine--tRNA ligase.